Consider the following 182-residue polypeptide: MKGWGWLALLLGVLLGTAWARRSQDLHCGACRALVDELEWEIARVDPKKTIQMGSFRINPDGSQSVVEVPYARSEAHLTELLEEVCDRMKEYGEQIDPSTHRKNYVRVVSRNGESSELDLQGIRIDSDISGTLKFACESIVEEYEDELIEFFSREADNVKDKLCSKRTDLCDHALHRSHDEL.

The first 20 residues, 1–20, serve as a signal peptide directing secretion; it reads MKGWGWLALLLGVLLGTAWA. The Saposin B-type domain occupies 24–175; that stretch reads QDLHCGACRA…KRTDLCDHAL (152 aa). 3 cysteine pairs are disulfide-bonded: C28/C171, C31/C164, and C86/C137. Residue S115 is modified to Phosphoserine. The short motif at 179–182 is the Prevents secretion from ER element; sequence HDEL.

This sequence belongs to the canopy family. Interacts with MYLIP/MIR.

It is found in the endoplasmic reticulum. Functionally, positive regulator of neurite outgrowth by stabilizing myosin regulatory light chain (MRLC). It prevents MIR-mediated MRLC ubiquitination and its subsequent proteasomal degradation. This chain is Protein canopy homolog 2 (Cnpy2), found in Mus musculus (Mouse).